The following is an 880-amino-acid chain: Alanine--tRNA ligase (880 aa).

Zn(2+) contacts are provided by histidine 566, histidine 570, cysteine 668, and histidine 672.

Belongs to the class-II aminoacyl-tRNA synthetase family. Zn(2+) is required as a cofactor.

Its subcellular location is the cytoplasm. It carries out the reaction tRNA(Ala) + L-alanine + ATP = L-alanyl-tRNA(Ala) + AMP + diphosphate. Catalyzes the attachment of alanine to tRNA(Ala) in a two-step reaction: alanine is first activated by ATP to form Ala-AMP and then transferred to the acceptor end of tRNA(Ala). Also edits incorrectly charged Ser-tRNA(Ala) and Gly-tRNA(Ala) via its editing domain. This chain is Alanine--tRNA ligase, found in Trichormus variabilis (strain ATCC 29413 / PCC 7937) (Anabaena variabilis).